We begin with the raw amino-acid sequence, 886 residues long: Inter-alpha-trypsin inhibitor heavy chain H3 (886 aa).

Residues 1-18 (MWWPYLVLALLSGLEASG) form the signal peptide. The propeptide occupies 19–30 (FPRSPLRLLGKR). Positions 26 to 155 (LLGKRSLPEG…KVTFELTYEE (130 aa)) constitute a VIT domain. Asn88 carries an N-linked (GlcNAc...) asparagine glycan. Positions 279-439 (PKNIVFVIDI…YNFLETMALE (161 aa)) constitute a VWFA domain. Residue Asn577 is glycosylated (N-linked (GlcNAc...) asparagine). Asp646 carries the aspartate 1-(chondroitin 4-sulfate)-ester modification. A propeptide spanning residues 647–886 (PHFIIQVPGK…HTDYIVPSLF (240 aa)) is cleaved from the precursor.

Belongs to the ITIH family. I-alpha-I plasma protease inhibitors are assembled from one or two heavy chains (HC) and one light chain, bikunin. Pre-alpha-inhibitor (P-alpha-I) is composed of ITIH3/HC3 and bikunin. Post-translationally, heavy chains are linked to bikunin via chondroitin 4-sulfate esterified to the alpha-carboxyl of the C-terminal aspartate after propeptide cleavage.

It localises to the secreted. May act as a carrier of hyaluronan in serum or as a binding protein between hyaluronan and other matrix protein, including those on cell surfaces in tissues to regulate the localization, synthesis and degradation of hyaluronan which are essential to cells undergoing biological processes. This Mesocricetus auratus (Golden hamster) protein is Inter-alpha-trypsin inhibitor heavy chain H3 (ITIH3).